A 676-amino-acid polypeptide reads, in one-letter code: DNA-directed RNA polymerase subunit beta' (676 aa).

Residues C69, C71, C87, and C90 each contribute to the Zn(2+) site. The Mg(2+) site is built by D485, D487, and D489.

Belongs to the RNA polymerase beta' chain family. RpoC1 subfamily. As to quaternary structure, in plastids the minimal PEP RNA polymerase catalytic core is composed of four subunits: alpha, beta, beta', and beta''. When a (nuclear-encoded) sigma factor is associated with the core the holoenzyme is formed, which can initiate transcription. Mg(2+) serves as cofactor. Zn(2+) is required as a cofactor.

The protein resides in the plastid. It localises to the chloroplast. The enzyme catalyses RNA(n) + a ribonucleoside 5'-triphosphate = RNA(n+1) + diphosphate. In terms of biological role, DNA-dependent RNA polymerase catalyzes the transcription of DNA into RNA using the four ribonucleoside triphosphates as substrates. This chain is DNA-directed RNA polymerase subunit beta', found in Fagopyrum esculentum subsp. ancestrale (Wild buckwheat).